Here is a 312-residue protein sequence, read N- to C-terminus: 4-hydroxyproline 2-epimerase (312 aa).

Cys-88 serves as the catalytic Proton acceptor. Substrate is bound by residues 89-90 (GH), His-208, and Asp-234. Catalysis depends on Cys-238, which acts as the Proton donor. 239–240 (GT) is a binding site for substrate.

Belongs to the proline racemase family.

The catalysed reaction is trans-4-hydroxy-L-proline = cis-4-hydroxy-D-proline. In terms of biological role, catalyzes the epimerization of trans-4-hydroxy-L-proline (t4LHyp) to cis-4-hydroxy-D-proline (c4DHyp). Is likely involved in a degradation pathway that converts t4LHyp to alpha-ketoglutarate. Can also catalyze the epimerization of trans-3-hydroxy-L-proline (t3LHyp) to cis-3-hydroxy-D-proline (c3DHyp), albeit with 500-fold lower efficiency. Displays no proline racemase activity. The polypeptide is 4-hydroxyproline 2-epimerase (Xanthomonas campestris pv. campestris (strain ATCC 33913 / DSM 3586 / NCPPB 528 / LMG 568 / P 25)).